We begin with the raw amino-acid sequence, 388 residues long: Protein kes1 (388 aa).

Belongs to the OSBP family.

Its function is as follows. Lipid transporter involved in lipid countertransport between the Golgi complex and membranes of the endoplasmic reticulum: specifically exchanges sterol with phosphatidylinositol 4-phosphate (PI4P), delivering sterol to the Golgi in exchange for PI4P, which is degraded by the SAC1 phosphatase in the endoplasmic reticulum. The chain is Protein kes1 (kes1) from Schizosaccharomyces pombe (strain 972 / ATCC 24843) (Fission yeast).